Reading from the N-terminus, the 76-residue chain is Small ribosomal subunit protein bS16 (76 aa).

The protein belongs to the bacterial ribosomal protein bS16 family.

This Helicobacter pylori (strain HPAG1) protein is Small ribosomal subunit protein bS16.